Here is a 213-residue protein sequence, read N- to C-terminus: HTH-type transcriptional regulator SrpR (213 aa).

The region spanning 10-70 (EETRQRIIDA…AVLASRQHPL (61 aa)) is the HTH tetR-type domain. Positions 33–52 (TLDQIARKAGVTRGAVYWHF) form a DNA-binding region, H-T-H motif.

Its function is as follows. In conjunction with SrpS represses the srpABC operon. This chain is HTH-type transcriptional regulator SrpR (srpR), found in Pseudomonas putida (Arthrobacter siderocapsulatus).